A 123-amino-acid chain; its full sequence is Methicillin resistance regulatory protein MecI (123 aa).

A DNA-binding region (H-T-H motif) is located at residues 7-71; sequence EISSAEWEFM…KDNKIFQYYS (65 aa). Residues 74–123 are important for dimerization; sequence EESDIKYKTSKNFINKVYKGGFNSLVLNFVEKEDLSQDEIEELRNILNKK.

Belongs to the BlaI transcriptional regulatory family. Monomer and homodimer. In terms of processing, upon exposure to beta-lactams, proteolytic cleavage at a single site impairs dimerization and abolishes repressor activity.

It localises to the cytoplasm. In terms of biological role, transcriptional repressor that constitutively blocks the transcription of the gene for the penicillin-binding protein MecA. Binds DNA as a dimer. This is Methicillin resistance regulatory protein MecI (mecI) from Staphylococcus aureus (strain Mu50 / ATCC 700699).